Here is a 290-residue protein sequence, read N- to C-terminus: MLKNDLSGARVVAVHAHPDDEAITTGGVLADLAARGADVTVITCTLGEQGEVIGETFAQLVNGDADQLGGFRIHELYASLEILGVRGIHLGGAGCWRDSGMVGDPANEHPRAFIHSGDRAVEQLKELLAELKPHLLITYGPDGGYGHPDHIRAHEITHAAAGEQRILWAVSDREELEDGLKAITGLPEGWGRGELSAVDSVDLSVELNDEVYATKVESMRAHATQLWIADGSVSRTNPVAAHAVTQQDNVKVWALSNLIAQPIMRHEHYQLGAGTPLPEGATGVLDGLEF.

Positions 17, 20, and 150 each coordinate Zn(2+).

This sequence belongs to the MshB deacetylase family. It depends on Zn(2+) as a cofactor.

It carries out the reaction 1D-myo-inositol 2-acetamido-2-deoxy-alpha-D-glucopyranoside + H2O = 1D-myo-inositol 2-amino-2-deoxy-alpha-D-glucopyranoside + acetate. Catalyzes the deacetylation of 1D-myo-inositol 2-acetamido-2-deoxy-alpha-D-glucopyranoside (GlcNAc-Ins) in the mycothiol biosynthesis pathway. The protein is 1D-myo-inositol 2-acetamido-2-deoxy-alpha-D-glucopyranoside deacetylase of Corynebacterium glutamicum (strain R).